The primary structure comprises 146 residues: Thyroid hormone-inducible hepatic protein (146 aa).

A disordered region spans residues 83–104 (KVAGSEENGTAETEEVEDESAS). Residues 94 to 104 (ETEEVEDESAS) are compositionally biased toward acidic residues.

It belongs to the SPOT14 family. In terms of assembly, homodimer. Heterodimer with MID1IP1. Interacts with THRB and PLAGL1. Mainly expressed in tissues that synthesize triglycerides.

It localises to the nucleus. The protein resides in the cytoplasm. In terms of biological role, plays a role in the regulation of lipogenesis, especially in lactating mammary gland. Important for the biosynthesis of triglycerides with medium-length fatty acid chains. May modulate lipogenesis by interacting with MID1IP1 and preventing its interaction with ACACA. May function as transcriptional coactivator. May modulate the transcription factor activity of THRB. The chain is Thyroid hormone-inducible hepatic protein (THRSP) from Homo sapiens (Human).